A 438-amino-acid chain; its full sequence is MVMSSPTNSARIILISGIASGQGKTTVTAALARKLIRQGLRVRVFKTGPDYLDPMILQRASGAEVYALDLWMVGLDDCRRLLARAASEVDVILIEGVMGLYDGDPSSADLARAFGVPVVVVLDAAKMAQTVGAVVLGLQQYGPVDLAGVIVNRLASPSHASMVTRGIRNVPILATLPKQQQALPERHLGLVQPDEIAQVDQVLDQLADQIEIDMVAWDAIAPVVLDGSLAAASTQQLLAGKTIAIARDAAFAFVYHANLECLRAAGAQLKFFSPLNDETIPAEADAVYIPGGYPELHCATLSSAQRWQDSMRAAHVRNMPILAECGGMMVIADSLIDAQGKKWPMVGLIPGEVAMQGKLAGLGMQSLATEDGELRGHAFHYSTLSTPVEPQAQTVKRSNGAHGEAVYKQGALTATYFHAYFSSCPAATARIFSPEIKA.

Residues 242-426 (TIAIARDAAF…FHAYFSSCPA (185 aa)) form the GATase cobBQ-type domain. The active-site Nucleophile is C325.

The protein belongs to the CobB/CbiA family. It depends on Mg(2+) as a cofactor.

It carries out the reaction cob(II)yrinate + 2 L-glutamine + 2 ATP + 2 H2O = cob(II)yrinate a,c diamide + 2 L-glutamate + 2 ADP + 2 phosphate + 2 H(+). It functions in the pathway cofactor biosynthesis; adenosylcobalamin biosynthesis; cob(II)yrinate a,c-diamide from sirohydrochlorin (anaerobic route): step 10/10. In terms of biological role, catalyzes the ATP-dependent amidation of the two carboxylate groups at positions a and c of cobyrinate, using either L-glutamine or ammonia as the nitrogen source. The chain is Cobyrinate a,c-diamide synthase from Herminiimonas arsenicoxydans.